The sequence spans 522 residues: Calcium-dependent protein kinase 14 (522 aa).

2 stretches are compositionally biased toward low complexity: residues 1 to 12 (MGNCCPPGSSSE) and 19 to 45 (SSGS…AAPA). Positions 1–58 (MGNCCPPGSSSEPDPPPASSGSSRPAGSAGAAASPATISPSAAPAPAKPPAPIGPVLG) are disordered. Gly2 is lipidated: N-myristoyl glycine. The Protein kinase domain occupies 68–326 (YTVGKELGRG…AYDVLNHPWI (259 aa)). ATP-binding positions include 74–82 (LGRGQFGVT) and Lys97. The Proton acceptor role is filled by Asp192. An autoinhibitory domain region spans residues 332–362 (APDTPLDNAVLGRLKQFRAMNQFKKAALRVI). 4 consecutive EF-hand domains span residues 369 to 404 (EEIR…KGTK), 405 to 440 (LTEA…MNRM), 441 to 476 (DREE…KGLM), and 480 to 511 (EIKD…GDPE). Ca(2+) contacts are provided by Asp382, Asp384, Ser386, Thr388, Glu393, Asp418, Asp420, Asn422, Thr424, Glu429, Asp454, Asp456, Ser458, Tyr460, Glu465, Asp489, Asp491, Asp493, Arg495, and Glu500.

Belongs to the protein kinase superfamily. Ser/Thr protein kinase family. CDPK subfamily.

Its subcellular location is the membrane. The enzyme catalyses L-seryl-[protein] + ATP = O-phospho-L-seryl-[protein] + ADP + H(+). The catalysed reaction is L-threonyl-[protein] + ATP = O-phospho-L-threonyl-[protein] + ADP + H(+). Activated by calcium. Autophosphorylation may play an important role in the regulation of the kinase activity. Functionally, may play a role in signal transduction pathways that involve calcium as a second messenger. This chain is Calcium-dependent protein kinase 14, found in Oryza sativa subsp. japonica (Rice).